A 396-amino-acid chain; its full sequence is Serpin-ZXA (396 aa).

Residues 343 to 367 (GTEAAAATAAVITLRSAPIAEDFVA) form an RCL region.

The protein belongs to the serpin family.

Its function is as follows. Probable serine protease inhibitor. This chain is Serpin-ZXA, found in Oryza sativa subsp. japonica (Rice).